A 70-amino-acid chain; its full sequence is Large ribosomal subunit protein bL28 (70 aa).

The protein belongs to the bacterial ribosomal protein bL28 family.

This Maridesulfovibrio salexigens (strain ATCC 14822 / DSM 2638 / NCIMB 8403 / VKM B-1763) (Desulfovibrio salexigens) protein is Large ribosomal subunit protein bL28.